The chain runs to 346 residues: Flap endonuclease 1 (346 aa).

Residues 1–102 form an N-domain region; it reads MGVTELGKLI…LEIEQRKKAK (102 aa). Residues aspartate 31, aspartate 84, glutamate 156, glutamate 158, aspartate 177, aspartate 179, and aspartate 239 each coordinate Mg(2+). Residues 120–261 are I-domain; that stretch reads DVAKYAKRAI…KALKLIWEFG (142 aa).

It belongs to the XPG/RAD2 endonuclease family. FEN1 subfamily. Interacts with PCNA. PCNA stimulates the nuclease activity without altering cleavage specificity. Mg(2+) is required as a cofactor.

In terms of biological role, structure-specific nuclease with 5'-flap endonuclease and 5'-3' exonuclease activities involved in DNA replication and repair. During DNA replication, cleaves the 5'-overhanging flap structure that is generated by displacement synthesis when DNA polymerase encounters the 5'-end of a downstream Okazaki fragment. Binds the unpaired 3'-DNA end and kinks the DNA to facilitate 5' cleavage specificity. Cleaves one nucleotide into the double-stranded DNA from the junction in flap DNA, leaving a nick for ligation. Also involved in the base excision repair (BER) pathway. Acts as a genome stabilization factor that prevents flaps from equilibrating into structures that lead to duplications and deletions. Also possesses 5'-3' exonuclease activity on nicked or gapped double-stranded DNA. The polypeptide is Flap endonuclease 1 (Pyrobaculum calidifontis (strain DSM 21063 / JCM 11548 / VA1)).